Consider the following 210-residue polypeptide: LexA repressor (210 aa).

The segment at residues 30–50 is a DNA-binding region (H-T-H motif); that stretch reads RVEIAREIGFKSPNAAEEHLK. Catalysis depends on for autocatalytic cleavage activity residues serine 127 and lysine 164.

It belongs to the peptidase S24 family. In terms of assembly, homodimer.

The enzyme catalyses Hydrolysis of Ala-|-Gly bond in repressor LexA.. Functionally, represses a number of genes involved in the response to DNA damage (SOS response), including recA and lexA. In the presence of single-stranded DNA, RecA interacts with LexA causing an autocatalytic cleavage which disrupts the DNA-binding part of LexA, leading to derepression of the SOS regulon and eventually DNA repair. This is LexA repressor from Actinobacillus pleuropneumoniae serotype 7 (strain AP76).